The sequence spans 733 residues: Polyribonucleotide nucleotidyltransferase (733 aa).

Residues D489 and D495 each coordinate Mg(2+). Positions 556–615 (PKIDTIKIDVDKIKIVIGKGGETIDKIIAETGVKIDIDEEGNVSIYSSDQDAINRAKEII) constitute a KH domain. The 69-residue stretch at 625-693 (DEVYHAKVVR…AKGRVDASMK (69 aa)) folds into the S1 motif domain. Residues 691–733 (SMKVLLPRPPKSDKPKHHHDKGHHPHKEYKGHKDHQESPKTEE) are disordered. Over residues 704-723 (KPKHHHDKGHHPHKEYKGHK) the composition is skewed to basic residues. Over residues 724 to 733 (DHQESPKTEE) the composition is skewed to basic and acidic residues.

Belongs to the polyribonucleotide nucleotidyltransferase family. It depends on Mg(2+) as a cofactor.

Its subcellular location is the cytoplasm. The catalysed reaction is RNA(n+1) + phosphate = RNA(n) + a ribonucleoside 5'-diphosphate. In terms of biological role, involved in mRNA degradation. Catalyzes the phosphorolysis of single-stranded polyribonucleotides processively in the 3'- to 5'-direction. This Streptococcus sanguinis (strain SK36) protein is Polyribonucleotide nucleotidyltransferase.